Reading from the N-terminus, the 182-residue chain is Biotin transporter BioY2 (182 aa).

A run of 5 helical transmembrane segments spans residues 12 to 32 (IALG…IGIV), 54 to 74 (FFAI…FTGG), 78 to 98 (IAVL…MGTL), 111 to 131 (IPAF…GTLW), and 150 to 170 (PFVF…LALI).

Belongs to the BioY family. In E.coli forms a stable energy-coupling factor (ECF) transporter complex composed of 2 membrane-embedded substrate-binding protein (S component), 2 ATP-binding proteins (A and A' components) and 2 transmembrane proteins (T component), probably with a stoichiometry of 2:1:1:2. May be able to interact with more than 1 S component at a time.

It is found in the cell membrane. In terms of biological role, probably a biotin-binding protein that interacts with the energy-coupling factor (ECF) ABC-transporter complex. Unlike classic ABC transporters this ECF transporter provides the energy necessary to transport a number of different substrates. The substrates themselves are bound by transmembrane, not extracytoplasmic soluble proteins. The chain is Biotin transporter BioY2 (bioY2) from Lactococcus lactis subsp. cremoris (strain MG1363).